We begin with the raw amino-acid sequence, 468 residues long: ERO1-like protein alpha (468 aa).

The N-terminal stretch at 1–23 is a signal peptide; sequence MGRGWGFLFGLLGAVWLLSSGHG. 8 cysteine pairs are disulfide-bonded: C35–C48, C37–C46, C85–C391, C94–C99, C94–C131, C99–C104, C208–C241, and C394–C397. S106 and S143 each carry phosphoserine. Position 145 is a phosphoserine; by FAM20C (S145). Residues R187, T189, and W200 each coordinate FAD. Residues S252 and H255 each contribute to the FAD site. N-linked (GlcNAc...) asparagine glycosylation is present at N280. The FAD site is built by R287 and R300. The N-linked (GlcNAc...) asparagine glycan is linked to N384.

It belongs to the EROs family. As to quaternary structure, predominantly monomer. May function both as a monomer and a homodimer. Interacts with PDILT. Interacts with ERP44; the interaction results in retention of ERO1A in the endoplasmic reticulum. It depends on FAD as a cofactor. N-glycosylated. In terms of processing, the Cys-94/Cys-99 and Cys-394/Cys-397 disulfide bonds constitute the redox-active center. The Cys-94/Cys-99 disulfide bond may accept electron from P4HB and funnel them to the active site disulfide Cys-394/Cys-397. The regulatory Cys-99/Cys-104 disulfide bond stabilizes the other regulatory bond Cys-94/Cys-131. Post-translationally, phosphorylated on Ser-145 by FAM20C in the Golgi which increases its enzymatic activity. Phosphorylation is induced by lactation. It is also induced by hypoxia and reductive stress. Widely expressed at low level. Expressed at high level in upper digestive tract. Highly expressed in esophagus. Weakly expressed in stomach and duodenum.

It is found in the endoplasmic reticulum membrane. The protein localises to the golgi apparatus lumen. Its subcellular location is the secreted. The protein resides in the cell projection. It localises to the dendrite. With respect to regulation, enzyme activity is tightly regulated to prevent the accumulation of reactive oxygen species in the endoplasmic reticulum. Reversibly down-regulated by the formation of disulfide bonds between the active site Cys-94 and Cys-131, and between Cys-99 and Cys-104. Glutathione may be required to regulate its activity in the endoplasmic reticulum. Its function is as follows. Oxidoreductase involved in disulfide bond formation in the endoplasmic reticulum. Efficiently reoxidizes P4HB/PDI, the enzyme catalyzing protein disulfide formation, in order to allow P4HB to sustain additional rounds of disulfide formation. Following P4HB reoxidation, passes its electrons to molecular oxygen via FAD, leading to the production of reactive oxygen species (ROS) in the cell. Required for the proper folding of immunoglobulins. Plays an important role in ER stress-induced, CHOP-dependent apoptosis by activating the inositol 1,4,5-trisphosphate receptor IP3R1. Involved in the release of the unfolded cholera toxin from reduced P4HB/PDI in case of infection by V.cholerae, thereby playing a role in retrotranslocation of the toxin. This chain is ERO1-like protein alpha, found in Homo sapiens (Human).